The sequence spans 73 residues: Large ribosomal subunit protein bL31 (73 aa).

The protein belongs to the bacterial ribosomal protein bL31 family. Type A subfamily. In terms of assembly, part of the 50S ribosomal subunit.

In terms of biological role, binds the 23S rRNA. This Agrobacterium fabrum (strain C58 / ATCC 33970) (Agrobacterium tumefaciens (strain C58)) protein is Large ribosomal subunit protein bL31.